The following is a 98-amino-acid chain: NADH-ubiquinone oxidoreductase chain 4L (98 aa).

3 helical membrane-spanning segments follow: residues 1 to 21 (MPLISTNILLAFITALLGVLI), 26 to 46 (LMSSLLCLEGMMLSMFILVSL), and 61 to 81 (LILLVFAACEAAVGLALLVMV).

Belongs to the complex I subunit 4L family. As to quaternary structure, core subunit of respiratory chain NADH dehydrogenase (Complex I) which is composed of 45 different subunits.

Its subcellular location is the mitochondrion inner membrane. It catalyses the reaction a ubiquinone + NADH + 5 H(+)(in) = a ubiquinol + NAD(+) + 4 H(+)(out). Its function is as follows. Core subunit of the mitochondrial membrane respiratory chain NADH dehydrogenase (Complex I) which catalyzes electron transfer from NADH through the respiratory chain, using ubiquinone as an electron acceptor. Part of the enzyme membrane arm which is embedded in the lipid bilayer and involved in proton translocation. The sequence is that of NADH-ubiquinone oxidoreductase chain 4L (MT-ND4L) from Nycticebus coucang (Slow loris).